A 187-amino-acid chain; its full sequence is dTTP/UTP pyrophosphatase (187 aa).

Asp72 acts as the Proton acceptor in catalysis.

Belongs to the Maf family. YhdE subfamily. It depends on a divalent metal cation as a cofactor.

The protein resides in the cytoplasm. It carries out the reaction dTTP + H2O = dTMP + diphosphate + H(+). The catalysed reaction is UTP + H2O = UMP + diphosphate + H(+). Functionally, nucleoside triphosphate pyrophosphatase that hydrolyzes dTTP and UTP. May have a dual role in cell division arrest and in preventing the incorporation of modified nucleotides into cellular nucleic acids. The protein is dTTP/UTP pyrophosphatase of Vibrio cholerae serotype O1 (strain ATCC 39315 / El Tor Inaba N16961).